Consider the following 328-residue polypeptide: GTPase Obg (328 aa).

The 159-residue stretch at 1-159 (MNFIDEVKIY…MWVQLSLKLL (159 aa)) folds into the Obg domain. Residues 160–327 (SDVGLVGLPN…IIKLALQTIK (168 aa)) form the OBG-type G domain. GTP contacts are provided by residues 166–173 (GLPNAGKS), 191–195 (FTTLV), 212–215 (DIPG), 279–282 (NKID), and 308–310 (STY). Positions 173 and 193 each coordinate Mg(2+).

This sequence belongs to the TRAFAC class OBG-HflX-like GTPase superfamily. OBG GTPase family. In terms of assembly, monomer. Requires Mg(2+) as cofactor.

The protein localises to the cytoplasm. Its function is as follows. An essential GTPase which binds GTP, GDP and possibly (p)ppGpp with moderate affinity, with high nucleotide exchange rates and a fairly low GTP hydrolysis rate. Plays a role in control of the cell cycle, stress response, ribosome biogenesis and in those bacteria that undergo differentiation, in morphogenesis control. The polypeptide is GTPase Obg (Rickettsia bellii (strain RML369-C)).